We begin with the raw amino-acid sequence, 549 residues long: Hydroxylamine reductase (549 aa).

[4Fe-4S] cluster is bound by residues cysteine 3, cysteine 6, cysteine 15, and cysteine 21. The hybrid [4Fe-2O-2S] cluster site is built by histidine 244, glutamate 268, cysteine 313, cysteine 405, cysteine 433, cysteine 458, glutamate 492, and lysine 494. Cysteine persulfide is present on cysteine 405.

The protein belongs to the HCP family. Requires [4Fe-4S] cluster as cofactor. It depends on hybrid [4Fe-2O-2S] cluster as a cofactor.

It is found in the cytoplasm. The enzyme catalyses A + NH4(+) + H2O = hydroxylamine + AH2 + H(+). In terms of biological role, catalyzes the reduction of hydroxylamine to form NH(3) and H(2)O. This Crocosphaera subtropica (strain ATCC 51142 / BH68) (Cyanothece sp. (strain ATCC 51142)) protein is Hydroxylamine reductase.